Consider the following 20-residue polypeptide: Ribosome-inactivating protein (20 aa).

The interval 1 to 20 is disordered; the sequence is NVRFDLSGATSSSYKTFIKN. Residues 8–20 show a composition bias toward polar residues; sequence GATSSSYKTFIKN.

It belongs to the ribosome-inactivating protein family. Type 1 RIP subfamily.

The enzyme catalyses Endohydrolysis of the N-glycosidic bond at one specific adenosine on the 28S rRNA.. This Cucurbita pepo (Vegetable marrow) protein is Ribosome-inactivating protein.